The sequence spans 307 residues: UDP-N-acetylenolpyruvoylglucosamine reductase (307 aa).

One can recognise an FAD-binding PCMH-type domain in the interval 27 to 193 (RVGGPADVVF…LDAVFEGLAD (167 aa)). The active site involves Arg172. The active-site Proton donor is Ser222. Glu299 is a catalytic residue.

It belongs to the MurB family. Requires FAD as cofactor.

It is found in the cytoplasm. The catalysed reaction is UDP-N-acetyl-alpha-D-muramate + NADP(+) = UDP-N-acetyl-3-O-(1-carboxyvinyl)-alpha-D-glucosamine + NADPH + H(+). It functions in the pathway cell wall biogenesis; peptidoglycan biosynthesis. In terms of biological role, cell wall formation. This Caulobacter sp. (strain K31) protein is UDP-N-acetylenolpyruvoylglucosamine reductase.